Reading from the N-terminus, the 777-residue chain is Endonuclease MutS2 (777 aa).

328–335 (GPNTGGKT) contributes to the ATP binding site. A Smr domain is found at 702 to 777 (LDLRGKRYEE…GSGCTIATLG (76 aa)).

This sequence belongs to the DNA mismatch repair MutS family. MutS2 subfamily. As to quaternary structure, homodimer. Binds to stalled ribosomes, contacting rRNA.

In terms of biological role, endonuclease that is involved in the suppression of homologous recombination and thus may have a key role in the control of bacterial genetic diversity. Functionally, acts as a ribosome collision sensor, splitting the ribosome into its 2 subunits. Detects stalled/collided 70S ribosomes which it binds and splits by an ATP-hydrolysis driven conformational change. Acts upstream of the ribosome quality control system (RQC), a ribosome-associated complex that mediates the extraction of incompletely synthesized nascent chains from stalled ribosomes and their subsequent degradation. Probably generates substrates for RQC. The chain is Endonuclease MutS2 from Streptococcus uberis (strain ATCC BAA-854 / 0140J).